Reading from the N-terminus, the 474-residue chain is Probable protein phosphatase 2C 37 (474 aa).

A disordered region spans residues 1–90; it reads MVMASAGVNM…RDDDGCSSTA (90 aa). Positions 57–77 are enriched in low complexity; sequence LPASSASPSPSPTSSAASSDC. The PPM-type phosphatase domain maps to 113–470; that stretch reads AFGSVSLAGR…DNISVVVIDL (358 aa). Positions 152, 153, and 387 each coordinate Mn(2+). The tract at residues 406–434 is disordered; the sequence is LEDGSPTSGRRAARSGEAASSSAGAPAAA. A compositionally biased stretch (low complexity) spans 420-434; it reads SGEAASSSAGAPAAA. Mn(2+) is bound at residue aspartate 461.

Belongs to the PP2C family. The cofactor is Mg(2+). It depends on Mn(2+) as a cofactor.

The catalysed reaction is O-phospho-L-seryl-[protein] + H2O = L-seryl-[protein] + phosphate. The enzyme catalyses O-phospho-L-threonyl-[protein] + H2O = L-threonyl-[protein] + phosphate. The polypeptide is Probable protein phosphatase 2C 37 (Oryza sativa subsp. japonica (Rice)).